A 706-amino-acid polypeptide reads, in one-letter code: Methionine--tRNA ligase (706 aa).

A 'HIGH' region motif is present at residues 13–23; that stretch reads PYANGNFHIGH. 4 residues coordinate Zn(2+): Cys-144, Cys-147, Cys-157, and Cys-160. The 'KMSKS' region motif lies at 341-345; it reads KMSKS. Lys-344 contributes to the ATP binding site. Residues 600–706 enclose the tRNA-binding domain; that stretch reads DFAKIDLRIA…PGATPGMRVR (107 aa).

This sequence belongs to the class-I aminoacyl-tRNA synthetase family. MetG type 1 subfamily. As to quaternary structure, homodimer. It depends on Zn(2+) as a cofactor.

It localises to the cytoplasm. The catalysed reaction is tRNA(Met) + L-methionine + ATP = L-methionyl-tRNA(Met) + AMP + diphosphate. Is required not only for elongation of protein synthesis but also for the initiation of all mRNA translation through initiator tRNA(fMet) aminoacylation. This is Methionine--tRNA ligase from Paracidovorax citrulli (strain AAC00-1) (Acidovorax citrulli).